Reading from the N-terminus, the 312-residue chain is Glyoxylate/hydroxypyruvate reductase A (312 aa).

Arg-227 is a catalytic residue. Residue His-275 is the Proton donor of the active site.

The protein belongs to the D-isomer specific 2-hydroxyacid dehydrogenase family. GhrA subfamily.

It is found in the cytoplasm. The enzyme catalyses glycolate + NADP(+) = glyoxylate + NADPH + H(+). The catalysed reaction is (R)-glycerate + NAD(+) = 3-hydroxypyruvate + NADH + H(+). It catalyses the reaction (R)-glycerate + NADP(+) = 3-hydroxypyruvate + NADPH + H(+). Catalyzes the NADPH-dependent reduction of glyoxylate and hydroxypyruvate into glycolate and glycerate, respectively. In Salmonella dublin (strain CT_02021853), this protein is Glyoxylate/hydroxypyruvate reductase A.